Reading from the N-terminus, the 457-residue chain is PDZ and LIM domain protein 7 (457 aa).

A PDZ domain is found at M1–Q85. At S78 the chain carries Phosphoserine. Disordered stretches follow at residues S82–D142, T176–V226, and T239–R258. Residue R103 is modified to Asymmetric dimethylarginine. S111 bears the Phosphoserine mark. Pro residues predominate over residues E208 to R221. S247 carries the phosphoserine modification. LIM zinc-binding domains are found at residues P280–A338, P339–T398, and K399–V457.

As to quaternary structure, binds via its LIM zinc-binding 3 domain (LIM 3) to endocytic codes of INSR, but not with those of IGF1R, LDLR, TFRC, or EGFR. Interacts with various PKC isoforms through the LIM zinc-binding domains. Binds to RET in a phosphorylation-independent manner via its LIM zinc-binding domain 2 (LIM 2). Probably part of a complex with SHC and the RET dimer. Interacts with TPM2. Interacts with TBX4 and TBX5. As to expression, isoform 1 and isoform 2 are expressed ubiquitously, however, isoform 2 predominates in skeletal muscle, isoform 1 is more abundant in lung, spleen, leukocytes and fetal liver.

Its subcellular location is the cytoplasm. The protein localises to the cytoskeleton. May function as a scaffold on which the coordinated assembly of proteins can occur. May play a role as an adapter that, via its PDZ domain, localizes LIM-binding proteins to actin filaments of both skeletal muscle and nonmuscle tissues. Involved in both of the two fundamental mechanisms of bone formation, direct bone formation (e.g. embryonic flat bones mandible and cranium), and endochondral bone formation (e.g. embryonic long bone development). Plays a role during fracture repair. Involved in BMP6 signaling pathway. The chain is PDZ and LIM domain protein 7 (PDLIM7) from Homo sapiens (Human).